A 403-amino-acid chain; its full sequence is Exodeoxyribonuclease 7 large subunit (403 aa).

This sequence belongs to the XseA family. As to quaternary structure, heterooligomer composed of large and small subunits.

Its subcellular location is the cytoplasm. The catalysed reaction is Exonucleolytic cleavage in either 5'- to 3'- or 3'- to 5'-direction to yield nucleoside 5'-phosphates.. In terms of biological role, bidirectionally degrades single-stranded DNA into large acid-insoluble oligonucleotides, which are then degraded further into small acid-soluble oligonucleotides. The protein is Exodeoxyribonuclease 7 large subunit of Clostridium botulinum (strain Okra / Type B1).